Here is a 156-residue protein sequence, read N- to C-terminus: MNATRRQRLWWVICVLTAAALAVTLIVFALQRNMSYLFTPSQVSAGEAAGYQQFRLGGMVKAGSIQRAGDSLKVSFTVIDKNAATQVEYTGILPDLFRDNQSVIANGRMQGGRFVANEVLAKHDETYMPKELKDAMAEGHAGKPIPATATPLTAPR.

Over 1-8 the chain is Cytoplasmic; the sequence is MNATRRQR. The chain crosses the membrane as a helical; Signal-anchor for type II membrane protein span at residues 9–29; the sequence is LWWVICVLTAAALAVTLIVFA. Over 30–156 the chain is Periplasmic; sequence LQRNMSYLFT…ATATPLTAPR (127 aa). The heme site is built by His123 and Tyr127. The segment at 137–156 is disordered; that stretch reads AEGHAGKPIPATATPLTAPR. Residues 146-156 show a composition bias toward low complexity; it reads PATATPLTAPR.

The protein belongs to the CcmE/CycJ family.

It is found in the cell inner membrane. Its function is as follows. Heme chaperone required for the biogenesis of c-type cytochromes. Transiently binds heme delivered by CcmC and transfers the heme to apo-cytochromes in a process facilitated by CcmF and CcmH. The polypeptide is Cytochrome c-type biogenesis protein CcmE 1 (Xanthomonas euvesicatoria pv. vesicatoria (strain 85-10) (Xanthomonas campestris pv. vesicatoria)).